The primary structure comprises 219 residues: Thiamine-phosphate synthase (219 aa).

Residues 44–48 (QFREK) and asparagine 79 each bind 4-amino-2-methyl-5-(diphosphooxymethyl)pyrimidine. Positions 80 and 99 each coordinate Mg(2+). Serine 117 provides a ligand contact to 4-amino-2-methyl-5-(diphosphooxymethyl)pyrimidine. Residue 143–145 (TST) coordinates 2-[(2R,5Z)-2-carboxy-4-methylthiazol-5(2H)-ylidene]ethyl phosphate. Lysine 146 is a binding site for 4-amino-2-methyl-5-(diphosphooxymethyl)pyrimidine. Residues glycine 175 and 195–196 (IS) contribute to the 2-[(2R,5Z)-2-carboxy-4-methylthiazol-5(2H)-ylidene]ethyl phosphate site.

Belongs to the thiamine-phosphate synthase family. It depends on Mg(2+) as a cofactor.

The catalysed reaction is 2-[(2R,5Z)-2-carboxy-4-methylthiazol-5(2H)-ylidene]ethyl phosphate + 4-amino-2-methyl-5-(diphosphooxymethyl)pyrimidine + 2 H(+) = thiamine phosphate + CO2 + diphosphate. It catalyses the reaction 2-(2-carboxy-4-methylthiazol-5-yl)ethyl phosphate + 4-amino-2-methyl-5-(diphosphooxymethyl)pyrimidine + 2 H(+) = thiamine phosphate + CO2 + diphosphate. It carries out the reaction 4-methyl-5-(2-phosphooxyethyl)-thiazole + 4-amino-2-methyl-5-(diphosphooxymethyl)pyrimidine + H(+) = thiamine phosphate + diphosphate. It functions in the pathway cofactor biosynthesis; thiamine diphosphate biosynthesis; thiamine phosphate from 4-amino-2-methyl-5-diphosphomethylpyrimidine and 4-methyl-5-(2-phosphoethyl)-thiazole: step 1/1. In terms of biological role, condenses 4-methyl-5-(beta-hydroxyethyl)thiazole monophosphate (THZ-P) and 2-methyl-4-amino-5-hydroxymethyl pyrimidine pyrophosphate (HMP-PP) to form thiamine monophosphate (TMP). The sequence is that of Thiamine-phosphate synthase from Bacillus cereus (strain B4264).